Reading from the N-terminus, the 202-residue chain is FMN-dependent NADH:quinone oxidoreductase (202 aa).

FMN-binding positions include S10, S16–S18, and M96–F99.

The protein belongs to the azoreductase type 1 family. In terms of assembly, homodimer. The cofactor is FMN.

It carries out the reaction 2 a quinone + NADH + H(+) = 2 a 1,4-benzosemiquinone + NAD(+). The enzyme catalyses N,N-dimethyl-1,4-phenylenediamine + anthranilate + 2 NAD(+) = 2-(4-dimethylaminophenyl)diazenylbenzoate + 2 NADH + 2 H(+). Its function is as follows. Quinone reductase that provides resistance to thiol-specific stress caused by electrophilic quinones. Also exhibits azoreductase activity. Catalyzes the reductive cleavage of the azo bond in aromatic azo compounds to the corresponding amines. The chain is FMN-dependent NADH:quinone oxidoreductase from Beijerinckia indica subsp. indica (strain ATCC 9039 / DSM 1715 / NCIMB 8712).